Here is a 413-residue protein sequence, read N- to C-terminus: Heparan-sulfate 6-O-sulfotransferase 1-A (413 aa).

At methionine 9–lysine 15 the chain is on the cytoplasmic side. The chain crosses the membrane as a helical; Signal-anchor for type II membrane protein span at residues phenylalanine 16–proline 36. Topologically, residues glycine 37–tryptophan 413 are lumenal. A 3'-phosphoadenylyl sulfate-binding site is contributed by histidine 92 to threonine 100. Residues lysine 122–lysine 123, arginine 139, tryptophan 144, and histidine 149 contribute to the substrate site. Histidine 149 functions as the Proton acceptor in the catalytic mechanism. Residues arginine 183 and serine 191 each coordinate 3'-phosphoadenylyl sulfate. Residues histidine 195 and tryptophan 202 each coordinate substrate. Asparagine 262 carries N-linked (GlcNAc...) asparagine glycosylation. A 3'-phosphoadenylyl sulfate-binding site is contributed by methionine 315–tyrosine 317. N-linked (GlcNAc...) asparagine glycosylation occurs at asparagine 318. Arginine 321 to alanine 322 contacts 3'-phosphoadenylyl sulfate. N-linked (GlcNAc...) asparagine glycosylation occurs at asparagine 329. The interval proline 374 to proline 401 is disordered.

The protein belongs to the sulfotransferase 6 family. As to expression, during somitogenesis, first expressed in polster and presumptive forebrain. During mid-somitogenesis, expressed in eye, hindbrain and anterior spinal cord. During late somitogenesis, strong expression in eye and hindbrain, decreased levels in midbrain and anterior spinal cord. At 24 hours post-fertilization (hpf), expressed in neural retina and lens, brain and anterior spinal cord. At 36 hpf, retinal expression is confined to the ciliary marginal zone and there is strong expression in tectum, rhombomeres and otic vesicle. At 48 hpf, expressed in retinal ganglion cells and in tectum, rhombomeres and pectoral fin. Not detected in the vasculature during embryogenesis.

The protein localises to the membrane. The enzyme catalyses alpha-D-glucosaminyl-[heparan sulfate](n) + 3'-phosphoadenylyl sulfate = 6-sulfo-alpha-D-glucosaminyl-[heparan sulfate](n) + adenosine 3',5'-bisphosphate + H(+). Functionally, 6-O-sulfation enzyme which catalyzes the transfer of sulfate from 3'-phosphoadenosine 5'-phosphosulfate (PAPS) to position 6 of the N-sulfoglucosamine residue (GlcNS) of heparan sulfate. The sequence is that of Heparan-sulfate 6-O-sulfotransferase 1-A from Danio rerio (Zebrafish).